Consider the following 357-residue polypeptide: 3-isopropylmalate dehydrogenase (357 aa).

76-89 (GPKWDNEPSHNRPE) contacts NAD(+). Residues R96, R106, R135, and D223 each coordinate substrate. Mg(2+) contacts are provided by D223, D247, and D251. An NAD(+)-binding site is contributed by 281–293 (GSAPDIAGQDKAN).

It belongs to the isocitrate and isopropylmalate dehydrogenases family. LeuB type 1 subfamily. As to quaternary structure, homodimer. It depends on Mg(2+) as a cofactor. Requires Mn(2+) as cofactor.

The protein localises to the cytoplasm. The enzyme catalyses (2R,3S)-3-isopropylmalate + NAD(+) = 4-methyl-2-oxopentanoate + CO2 + NADH. It participates in amino-acid biosynthesis; L-leucine biosynthesis; L-leucine from 3-methyl-2-oxobutanoate: step 3/4. Functionally, catalyzes the oxidation of 3-carboxy-2-hydroxy-4-methylpentanoate (3-isopropylmalate) to 3-carboxy-4-methyl-2-oxopentanoate. The product decarboxylates to 4-methyl-2 oxopentanoate. In Helicobacter hepaticus (strain ATCC 51449 / 3B1), this protein is 3-isopropylmalate dehydrogenase.